Here is a 392-residue protein sequence, read N- to C-terminus: 8-amino-7-oxononanoate synthase (392 aa).

R19 is a binding site for substrate. 106-107 (GY) is a pyridoxal 5'-phosphate binding site. H131 serves as a coordination point for substrate. S176, H204, and T233 together coordinate pyridoxal 5'-phosphate. The residue at position 236 (K236) is an N6-(pyridoxal phosphate)lysine. T350 serves as a coordination point for substrate.

Belongs to the class-II pyridoxal-phosphate-dependent aminotransferase family. BioF subfamily. In terms of assembly, homodimer. It depends on pyridoxal 5'-phosphate as a cofactor.

It catalyses the reaction 6-carboxyhexanoyl-[ACP] + L-alanine + H(+) = (8S)-8-amino-7-oxononanoate + holo-[ACP] + CO2. It participates in cofactor biosynthesis; biotin biosynthesis. Its function is as follows. Catalyzes the decarboxylative condensation of pimeloyl-[acyl-carrier protein] and L-alanine to produce 8-amino-7-oxononanoate (AON), [acyl-carrier protein], and carbon dioxide. This chain is 8-amino-7-oxononanoate synthase, found in Stutzerimonas stutzeri (strain A1501) (Pseudomonas stutzeri).